We begin with the raw amino-acid sequence, 340 residues long: Holliday junction branch migration complex subunit RuvB (340 aa).

The tract at residues 4 to 184 is large ATPase domain (RuvB-L); it reads TDRIVGGQSL…FGIVQRLEFY (181 aa). ATP-binding positions include Arg-24, Gly-65, Lys-68, Thr-69, Thr-70, 131 to 133, Arg-174, Tyr-184, and Arg-221; that span reads EDF. Mg(2+) is bound at residue Thr-69. The segment at 185-255 is small ATPAse domain (RuvB-S); that stretch reads SIEELAQIVT…IADLALNLLE (71 aa). Residues 258–340 are head domain (RuvB-H); the sequence is PLGLDKMDRR…TMPERNLEDE (83 aa). 3 residues coordinate DNA: Arg-294, Arg-313, and Arg-318.

The protein belongs to the RuvB family. Homohexamer. Forms an RuvA(8)-RuvB(12)-Holliday junction (HJ) complex. HJ DNA is sandwiched between 2 RuvA tetramers; dsDNA enters through RuvA and exits via RuvB. An RuvB hexamer assembles on each DNA strand where it exits the tetramer. Each RuvB hexamer is contacted by two RuvA subunits (via domain III) on 2 adjacent RuvB subunits; this complex drives branch migration. In the full resolvosome a probable DNA-RuvA(4)-RuvB(12)-RuvC(2) complex forms which resolves the HJ.

It localises to the cytoplasm. The enzyme catalyses ATP + H2O = ADP + phosphate + H(+). Its function is as follows. The RuvA-RuvB-RuvC complex processes Holliday junction (HJ) DNA during genetic recombination and DNA repair, while the RuvA-RuvB complex plays an important role in the rescue of blocked DNA replication forks via replication fork reversal (RFR). RuvA specifically binds to HJ cruciform DNA, conferring on it an open structure. The RuvB hexamer acts as an ATP-dependent pump, pulling dsDNA into and through the RuvAB complex. RuvB forms 2 homohexamers on either side of HJ DNA bound by 1 or 2 RuvA tetramers; 4 subunits per hexamer contact DNA at a time. Coordinated motions by a converter formed by DNA-disengaged RuvB subunits stimulates ATP hydrolysis and nucleotide exchange. Immobilization of the converter enables RuvB to convert the ATP-contained energy into a lever motion, pulling 2 nucleotides of DNA out of the RuvA tetramer per ATP hydrolyzed, thus driving DNA branch migration. The RuvB motors rotate together with the DNA substrate, which together with the progressing nucleotide cycle form the mechanistic basis for DNA recombination by continuous HJ branch migration. Branch migration allows RuvC to scan DNA until it finds its consensus sequence, where it cleaves and resolves cruciform DNA. The polypeptide is Holliday junction branch migration complex subunit RuvB (Hydrogenovibrio crunogenus (strain DSM 25203 / XCL-2) (Thiomicrospira crunogena)).